Reading from the N-terminus, the 183-residue chain is Oleosin 5 (183 aa).

The tract at residues 1–39 (MADVRTHSHQLQVHPQRQHEGGIKVLYPQSGPSSTQVLA) is polar. 3 consecutive transmembrane segments (helical) span residues 37–57 (VLAV…AGLT), 66–86 (MLAF…AFVI), and 87–107 (GLAM…LSSM). Residues 40–113 (VFVGVPIGGT…LSSMSWVLNY (74 aa)) form a hydrophobic region. Positions 144 to 183 (KDAGQTIEDKAHDVREAKTFDVRDRDTTKGTHNVRDTKTT) are disordered.

This sequence belongs to the oleosin family.

It is found in the lipid droplet. The protein localises to the membrane. May have a structural role to stabilize the lipid body during desiccation of the seed by preventing coalescence of the oil. Probably interacts with both lipid and phospholipid moieties of lipid bodies. May also provide recognition signals for specific lipase anchorage in lipolysis during seedling growth. In Arabidopsis thaliana (Mouse-ear cress), this protein is Oleosin 5.